Here is a 79-residue protein sequence, read N- to C-terminus: Large ribosomal subunit protein uL24 (79 aa).

It belongs to the universal ribosomal protein uL24 family. As to quaternary structure, part of the 50S ribosomal subunit.

One of two assembly initiator proteins, it binds directly to the 5'-end of the 23S rRNA, where it nucleates assembly of the 50S subunit. In terms of biological role, one of the proteins that surrounds the polypeptide exit tunnel on the outside of the subunit. In Lactobacillus delbrueckii subsp. bulgaricus (strain ATCC 11842 / DSM 20081 / BCRC 10696 / JCM 1002 / NBRC 13953 / NCIMB 11778 / NCTC 12712 / WDCM 00102 / Lb 14), this protein is Large ribosomal subunit protein uL24.